The primary structure comprises 682 residues: Potassium-transporting ATPase ATP-binding subunit (682 aa).

Transmembrane regions (helical) follow at residues 35–55, 62–82, 219–239, and 254–274; these read VMFIVWVGSLLTTLLAIAMAG, ATFTAAVSIWLWFTVLFANFA, IALTILLIALTLVFLLATATI, and VLVALLVCLIPTTIGGLLSAI. The active-site 4-aspartylphosphate intermediate is the Asp307. ATP contacts are provided by residues Asp344, Glu348, 377–384, and Lys395; that span reads FTAQTRMS. The Mg(2+) site is built by Asp518 and Asp522. 3 helical membrane passes run 588 to 608, 616 to 636, and 656 to 676; these read FAIIPAAFAAVYPQLAMLNVM, AILSAVIFNALIIVFLIPLAL, and IYGLGGLLVPFIGIKAIDLLL.

Belongs to the cation transport ATPase (P-type) (TC 3.A.3) family. Type IA subfamily. The system is composed of three essential subunits: KdpA, KdpB and KdpC.

The protein resides in the cell inner membrane. The catalysed reaction is K(+)(out) + ATP + H2O = K(+)(in) + ADP + phosphate + H(+). Part of the high-affinity ATP-driven potassium transport (or Kdp) system, which catalyzes the hydrolysis of ATP coupled with the electrogenic transport of potassium into the cytoplasm. This subunit is responsible for energy coupling to the transport system and for the release of the potassium ions to the cytoplasm. The sequence is that of Potassium-transporting ATPase ATP-binding subunit from Klebsiella pneumoniae subsp. pneumoniae (strain ATCC 700721 / MGH 78578).